The sequence spans 315 residues: Protein-export membrane protein SecF (315 aa).

6 helical membrane-spanning segments follow: residues 35-55, 152-172, 181-201, 205-225, 242-264, and 282-302; these read MVLYPLVVFLVAALILAVHFP, QGIKAVIYAFIGMAIVVFLFF, IIFSAFSDMVIALATMGILGI, TATIAALLMLIGYTVDSNILL, LSAVSTGFTMSTTTLGALFILWL, and LLADFMNTWIFNAGVLRWYIA.

This sequence belongs to the SecD/SecF family. SecF subfamily. In terms of assembly, part of the protein translocation apparatus. Forms a complex with SecD.

It is found in the cell membrane. In terms of biological role, involved in protein export. The sequence is that of Protein-export membrane protein SecF from Thermococcus gammatolerans (strain DSM 15229 / JCM 11827 / EJ3).